Here is a 1657-residue protein sequence, read N- to C-terminus: Androglobin (1657 aa).

Basic residues predominate over residues 1–11 (MASKQAKRKEV). Disordered stretches follow at residues 1–40 (MASKQAKRKEVHRINSAHGSDKSKDLYHFGSNVPPGSFEQ) and 321–398 (TKEN…SSDV). A Calpain catalytic domain is found at 70-402 (KDKTAKSPIF…RPSSDVQYSM (333 aa)). The span at 321–386 (TKENKDGKDG…DGEKEKEKFK (66 aa)) shows a compositional bias: basic and acidic residues. In terms of domain architecture, Globin; C-terminal part spans 762-889 (HVCSMTTFVI…EDVSLAEWVD (128 aa)). Heme b is bound by residues Gln-791 and His-823. The IQ domain occupies 905-934 (EIAAAVKIQSMWKGCYVRLLMKARKPETKE). The 33-residue stretch at 935-967 (NVTVADTLQKIWAVLEMNLEQYALSLLRLMFKS) folds into the Globin; N-terminal part domain. 4 disordered regions span residues 1184–1226 (SKQV…TDTG), 1288–1356 (KHEE…QEDP), 1422–1459 (TTDTTTSAPSPETLSVSQSQTKSSEEGELDTGKYADIK), and 1638–1657 (IEKKSPASDSQKKKKVGKKK). The span at 1321–1336 (EKSAEKEKLAKEKQAP) shows a compositional bias: basic and acidic residues. 2 stretches are compositionally biased toward polar residues: residues 1341–1351 (QQVQMPTAVHS) and 1422–1443 (TTDTTTSAPSPETLSVSQSQTK). Residues 1585–1640 (DEVLEMYGEMRDSVDEARQKILDIREVYRNKLLEAERLRMEALAAQEAAVKIEIEK) are a coiled coil.

The protein in the central section; belongs to the globin family. It in the N-terminal section; belongs to the peptidase C2 family. In terms of assembly, interacts with septin SEPT10; contributes to in vitro proteolytic cleavage of SEPT10 in a calmodulin-dependent manner. Interacts with CFAP69. Interacts with SPEF2. May interact with calmodulin. Strongly expressed in testis and lung. Weakly expressed in heart, brain, spleen, kidney and tongue.

The protein localises to the cell projection. It localises to the cilium. The protein resides in the flagellum. Probable chimeric globin with a bis-histidyl six-coordinate heme-iron atom through which it could bind dioxygen, carbon monoxide and nitric oxide. Required for sperm flagellum formation and maturation of elongating spermatids, thus playing an essential role in male fertility. This is Androglobin from Mus musculus (Mouse).